The chain runs to 186 residues: NADH-quinone oxidoreductase subunit B 2 (186 aa).

The disordered stretch occupies residues 1–27 (MPSFTQPHSAPRNFQFPGQQRQGDPTM). Residues Cys-65, Cys-66, Cys-130, and Cys-160 each coordinate [4Fe-4S] cluster.

This sequence belongs to the complex I 20 kDa subunit family. NDH-1 is composed of 14 different subunits. Subunits NuoB, C, D, E, F, and G constitute the peripheral sector of the complex. [4Fe-4S] cluster is required as a cofactor.

It is found in the cell inner membrane. It carries out the reaction a quinone + NADH + 5 H(+)(in) = a quinol + NAD(+) + 4 H(+)(out). Its function is as follows. NDH-1 shuttles electrons from NADH, via FMN and iron-sulfur (Fe-S) centers, to quinones in the respiratory chain. The immediate electron acceptor for the enzyme in this species is believed to be ubiquinone. Couples the redox reaction to proton translocation (for every two electrons transferred, four hydrogen ions are translocated across the cytoplasmic membrane), and thus conserves the redox energy in a proton gradient. The sequence is that of NADH-quinone oxidoreductase subunit B 2 from Rhizobium etli (strain ATCC 51251 / DSM 11541 / JCM 21823 / NBRC 15573 / CFN 42).